Reading from the N-terminus, the 190-residue chain is Small ribosomal subunit protein uS4 (190 aa).

The 73-residue stretch at 106–178 (RRLQTVVFKH…GRVKRVKRNA (73 aa)) folds into the S4 RNA-binding domain. A disordered region spans residues 166 to 190 (GRPGRVKRVKRNAAKKGSGGGDDDE). Positions 169–179 (GRVKRVKRNAA) are enriched in basic residues.

Belongs to the universal ribosomal protein uS4 family.

This is Small ribosomal subunit protein uS4 from Trypanosoma brucei brucei.